A 23-amino-acid chain; its full sequence is Septenin 2a (23 aa).

As to expression, expressed in skin glands.

The protein localises to the secreted. May act as an antimicrobial peptide. In Osteopilus septentrionalis (Cuban treefrog), this protein is Septenin 2a.